We begin with the raw amino-acid sequence, 457 residues long: Argininosuccinate lyase (457 aa).

The protein belongs to the lyase 1 family. Argininosuccinate lyase subfamily.

Its subcellular location is the cytoplasm. It carries out the reaction 2-(N(omega)-L-arginino)succinate = fumarate + L-arginine. Its pathway is amino-acid biosynthesis; L-arginine biosynthesis; L-arginine from L-ornithine and carbamoyl phosphate: step 3/3. In Pectobacterium carotovorum subsp. carotovorum (strain PC1), this protein is Argininosuccinate lyase.